Here is a 599-residue protein sequence, read N- to C-terminus: Elongation factor 4 (599 aa).

Residues 2–184 (KNIRNFSIIA…RLVRDIPPPE (183 aa)) form the tr-type G domain. GTP is bound by residues 14–19 (DHGKST) and 131–134 (NKID).

This sequence belongs to the TRAFAC class translation factor GTPase superfamily. Classic translation factor GTPase family. LepA subfamily.

Its subcellular location is the cell inner membrane. The catalysed reaction is GTP + H2O = GDP + phosphate + H(+). Functionally, required for accurate and efficient protein synthesis under certain stress conditions. May act as a fidelity factor of the translation reaction, by catalyzing a one-codon backward translocation of tRNAs on improperly translocated ribosomes. Back-translocation proceeds from a post-translocation (POST) complex to a pre-translocation (PRE) complex, thus giving elongation factor G a second chance to translocate the tRNAs correctly. Binds to ribosomes in a GTP-dependent manner. This chain is Elongation factor 4, found in Escherichia coli (strain UTI89 / UPEC).